The primary structure comprises 802 residues: Ribosome-releasing factor 2, mitochondrial (802 aa).

The tr-type G domain maps to 13 to 297 (KKIRNIGIIA…AVVDFLPSPA (285 aa)). Residues 22 to 29 (AHIDAGKT), 86 to 90 (DTPGH), and 140 to 143 (NKMD) each bind GTP.

It belongs to the TRAFAC class translation factor GTPase superfamily. Classic translation factor GTPase family. EF-G/EF-2 subfamily.

The protein localises to the mitochondrion. Its function is as follows. Mitochondrial GTPase that mediates the disassembly of ribosomes from messenger RNA at the termination of mitochondrial protein biosynthesis. Not involved in the GTP-dependent ribosomal translocation step during translation elongation. The chain is Ribosome-releasing factor 2, mitochondrial from Yarrowia lipolytica (strain CLIB 122 / E 150) (Yeast).